The following is a 141-amino-acid chain: Nucleoside diphosphate kinase (141 aa).

Residues K11, F59, R87, T93, R104, and N114 each coordinate ATP. H117 functions as the Pros-phosphohistidine intermediate in the catalytic mechanism.

It belongs to the NDK family. As to quaternary structure, homotetramer. The cofactor is Mg(2+).

The protein localises to the cytoplasm. The enzyme catalyses a 2'-deoxyribonucleoside 5'-diphosphate + ATP = a 2'-deoxyribonucleoside 5'-triphosphate + ADP. It catalyses the reaction a ribonucleoside 5'-diphosphate + ATP = a ribonucleoside 5'-triphosphate + ADP. Its function is as follows. Major role in the synthesis of nucleoside triphosphates other than ATP. The ATP gamma phosphate is transferred to the NDP beta phosphate via a ping-pong mechanism, using a phosphorylated active-site intermediate. In Polaromonas sp. (strain JS666 / ATCC BAA-500), this protein is Nucleoside diphosphate kinase.